Consider the following 581-residue polypeptide: Cytosolic Fe-S cluster assembly factor nar-1 (581 aa).

The [4Fe-4S] cluster site is built by C20, C68, C71, C74, C215, C270, C457, and C461.

Belongs to the NARF family.

Functionally, component of the cytosolic Fe/S protein assembly machinery. Required for maturation of extramitochondrial Fe/S proteins. May play a role in the transfer of pre-assembled Fe/S clusters to target apoproteins. The protein is Cytosolic Fe-S cluster assembly factor nar-1 (nar-1) of Neurospora crassa (strain ATCC 24698 / 74-OR23-1A / CBS 708.71 / DSM 1257 / FGSC 987).